The primary structure comprises 301 residues: D-alanine--D-alanine ligase (301 aa).

Residues 101 to 296 form the ATP-grasp domain; sequence KLMWRAAGLA…YPTLVRRVLE (196 aa). 127-182 contacts ATP; the sequence is EEELGLPLFVKPAREGSSIGVTKVKERGALKAAYEEAARHDPLVIAEKGVMGGEYT. Residues Asp-250, Glu-263, and Asn-265 each contribute to the Mg(2+) site.

The protein belongs to the D-alanine--D-alanine ligase family. The cofactor is Mg(2+). Requires Mn(2+) as cofactor.

It localises to the cytoplasm. The catalysed reaction is 2 D-alanine + ATP = D-alanyl-D-alanine + ADP + phosphate + H(+). It functions in the pathway cell wall biogenesis; peptidoglycan biosynthesis. Cell wall formation. The chain is D-alanine--D-alanine ligase from Dechloromonas aromatica (strain RCB).